The chain runs to 301 residues: 2-dehydropantoate 2-reductase (301 aa).

NADP(+)-binding positions include 7–12, Lys74, Asn99, and Ala123; that span reads GAGAIG. The active-site Proton donor is Lys179. Residues Lys179, Asn183, Asn187, Asn197, and 246–249 each bind substrate; that span reads NYNS. NADP(+) is bound at residue Glu261.

This sequence belongs to the ketopantoate reductase family.

It localises to the cytoplasm. It carries out the reaction (R)-pantoate + NAD(+) = 2-dehydropantoate + NADH + H(+). It catalyses the reaction (R)-pantoate + NADP(+) = 2-dehydropantoate + NADPH + H(+). Its pathway is cofactor biosynthesis; coenzyme A biosynthesis. Its function is as follows. Catalyzes the NAD(P)H-dependent reduction of ketopantoate into pantoic acid. This Pyrococcus horikoshii (strain ATCC 700860 / DSM 12428 / JCM 9974 / NBRC 100139 / OT-3) protein is 2-dehydropantoate 2-reductase.